A 501-amino-acid chain; its full sequence is Zinc finger protein 704 (501 aa).

The segment covering 80–96 (SLKSTCNGGQRDGLTQG) has biased composition (polar residues). 3 disordered regions span residues 80–138 (SLKS…HTRS), 183–203 (PLVRSPPVKVSEGLNGSWKDG), and 216–267 (WSWS…LFDE). The segment covering 115–137 (EEPRVLEHKRTGRALETEKDHTR) has biased composition (basic and acidic residues). A C2H2-type zinc finger spans residues 281-306 (FKCLWKNCGKVLSTAAGIQRHIRTVH). Disordered regions lie at residues 340-380 (SLSP…SRSA), 398-419 (PVTIPSTSSTGFTPSSSSFSIS), 427-446 (FTGTSASPTHSRTQGFGEQH), and 453-472 (LSSPPRAAGSLSRKSRGEGK). Residues 368-380 (SESSSSTPLSRSA) show a composition bias toward low complexity. The CR1 signature appears at 472–476 (KKCRK). The CR2 signature appears at 490–494 (CRWKK).

The protein resides in the nucleus. Its function is as follows. Transcription factor. The protein is Zinc finger protein 704 (znf704) of Danio rerio (Zebrafish).